The following is a 193-amino-acid chain: ATP-dependent Clp protease proteolytic subunit (193 aa).

The Nucleophile role is filled by Ser98. The active site involves His123.

It belongs to the peptidase S14 family. Fourteen ClpP subunits assemble into 2 heptameric rings which stack back to back to give a disk-like structure with a central cavity, resembling the structure of eukaryotic proteasomes.

It is found in the cytoplasm. The catalysed reaction is Hydrolysis of proteins to small peptides in the presence of ATP and magnesium. alpha-casein is the usual test substrate. In the absence of ATP, only oligopeptides shorter than five residues are hydrolyzed (such as succinyl-Leu-Tyr-|-NHMec, and Leu-Tyr-Leu-|-Tyr-Trp, in which cleavage of the -Tyr-|-Leu- and -Tyr-|-Trp bonds also occurs).. Its function is as follows. Cleaves peptides in various proteins in a process that requires ATP hydrolysis. Has a chymotrypsin-like activity. Plays a major role in the degradation of misfolded proteins. The sequence is that of ATP-dependent Clp protease proteolytic subunit from Haemophilus influenzae (strain PittEE).